The following is an 84-amino-acid chain: Esculentin-1SIa (84 aa).

The signal sequence occupies residues 1-22 (MFTLKKPLLLIVLLGIISLSLC). The propeptide at 23-36 (EQERAADEDEGSEI) is removed in mature form. A disulfide bridge links cysteine 78 with cysteine 84.

Expressed by the skin glands.

It is found in the secreted. Its function is as follows. Has antimicrobial activity against Gram-negative bacterium E.coli ATCC 8739 (MIC=6.3 ug), against Gram positive bacteria S.aureus ATCC 6538 (MIC=3.1 ug), methicillin-resistant S.aureus ATCC 43300 (MIC=25 ug) and B.subtilis ATCC 6633 (MIC=25 ug). Has no activity against fungus C.albicans ATCC 90028. In Odorrana ishikawae (Ishikawa's frog), this protein is Esculentin-1SIa.